Consider the following 115-residue polypeptide: OV39 antigen (115 aa).

This Onchocerca volvulus protein is OV39 antigen (OV39).